The sequence spans 560 residues: Formate--tetrahydrofolate ligase (560 aa).

Residue 69 to 76 (TPAGEGKS) coordinates ATP.

This sequence belongs to the formate--tetrahydrofolate ligase family.

The enzyme catalyses (6S)-5,6,7,8-tetrahydrofolate + formate + ATP = (6R)-10-formyltetrahydrofolate + ADP + phosphate. Its pathway is one-carbon metabolism; tetrahydrofolate interconversion. The sequence is that of Formate--tetrahydrofolate ligase from Bacillus pumilus (strain SAFR-032).